We begin with the raw amino-acid sequence, 519 residues long: NADH-quinone oxidoreductase subunit N (519 aa).

The next 14 helical transmembrane spans lie at 22-42 (LLPMLIVFGVACAGVLVEAFV), 53-73 (VLALGGLVAALIAVVSNTGLP), 87-107 (PTLFIQGTILALSIGALLLIA), 141-161 (TEVFPLAMFAVGGMMLFPAAN), 163-183 (LITAFVALEVLSLPLYLLAGM), 198-218 (YFLLGAFSSAFFVYGLALVYG), 242-262 (IIVGLALIGISLLFKLSGVPF), 287-307 (VAAFGALLRVFFVAFGGLAWD), 310-330 (PVIWGVAIATMVVGAILGITQ), 336-356 (LLAYSSIAHAGFVLTAFAATT), 363-383 (VLFYLVAYGFMTIGAFAIVIL), 406-426 (LVAGIFALFLLAMAGLPPTSG), 442-461 (AGPLVIVGVLASAVTAYYYL), and 483-503 (GALASAAIALGVIVTVVLGIV).

This sequence belongs to the complex I subunit 2 family. NDH-1 is composed of 14 different subunits. Subunits NuoA, H, J, K, L, M, N constitute the membrane sector of the complex.

It is found in the cell membrane. It carries out the reaction a quinone + NADH + 5 H(+)(in) = a quinol + NAD(+) + 4 H(+)(out). NDH-1 shuttles electrons from NADH, via FMN and iron-sulfur (Fe-S) centers, to quinones in the respiratory chain. The immediate electron acceptor for the enzyme in this species is believed to be a menaquinone. Couples the redox reaction to proton translocation (for every two electrons transferred, four hydrogen ions are translocated across the cytoplasmic membrane), and thus conserves the redox energy in a proton gradient. The polypeptide is NADH-quinone oxidoreductase subunit N (Acidothermus cellulolyticus (strain ATCC 43068 / DSM 8971 / 11B)).